The primary structure comprises 183 residues: Oligoribonuclease (183 aa).

The Exonuclease domain occupies leucine 8–leucine 171. Residue tyrosine 129 is part of the active site.

The protein belongs to the oligoribonuclease family.

It localises to the cytoplasm. Functionally, 3'-to-5' exoribonuclease specific for small oligoribonucleotides. This Coxiella burnetii (strain RSA 493 / Nine Mile phase I) protein is Oligoribonuclease.